The following is a 119-amino-acid chain: Ribosome-binding factor A (119 aa).

The protein belongs to the RbfA family. In terms of assembly, monomer. Binds 30S ribosomal subunits, but not 50S ribosomal subunits or 70S ribosomes.

Its subcellular location is the cytoplasm. One of several proteins that assist in the late maturation steps of the functional core of the 30S ribosomal subunit. Associates with free 30S ribosomal subunits (but not with 30S subunits that are part of 70S ribosomes or polysomes). Required for efficient processing of 16S rRNA. May interact with the 5'-terminal helix region of 16S rRNA. In Mycoplasmoides gallisepticum (strain R(low / passage 15 / clone 2)) (Mycoplasma gallisepticum), this protein is Ribosome-binding factor A.